A 455-amino-acid chain; its full sequence is Beta-1,4-mannosyltransferase bre-3 (455 aa).

The protein belongs to the glycosyltransferase 2 family.

Its subcellular location is the cytoplasm. The protein operates within protein modification; protein glycosylation. In terms of biological role, glycosyltransferase with a proposed role in glycosphingolipid biosynthesis. Involved in susceptibility to pore-forming crystal toxins in conjunction with bre-1, bre-2 and bre-4. Involved in resistance to the nematotoxic C.cinerea galectin Cgl2. Has a role in determining brood size. The protein is Beta-1,4-mannosyltransferase bre-3 of Caenorhabditis briggsae.